We begin with the raw amino-acid sequence, 280 residues long: Urease accessory protein UreD 1 (280 aa).

Belongs to the UreD family. In terms of assembly, ureD, UreF and UreG form a complex that acts as a GTP-hydrolysis-dependent molecular chaperone, activating the urease apoprotein by helping to assemble the nickel containing metallocenter of UreC. The UreE protein probably delivers the nickel.

It is found in the cytoplasm. Required for maturation of urease via the functional incorporation of the urease nickel metallocenter. The polypeptide is Urease accessory protein UreD 1 (Brucella melitensis biotype 1 (strain ATCC 23456 / CCUG 17765 / NCTC 10094 / 16M)).